The sequence spans 994 residues: Chromatin modification-related protein vid21 (994 aa).

2 disordered regions span residues 122–275 and 288–308; these read PDNL…APPV and PKVD…ENDV. Composition is skewed to basic and acidic residues over residues 158-171, 178-191, 204-233, 254-265, and 288-305; these read TIHK…KETI, KEVE…EEKG, LTEE…KEHE, VESKEVKKKEVS, and PKVD…KVTE. 2 positions are modified to phosphoserine: Ser298 and Ser378. The HSA domain maps to 475–548; it reads PKRQNEMPRL…SKNKKPYMQE (74 aa). The disordered stretch occupies residues 671–693; that stretch reads SFMEKKARSDENQLDGNKIKDDN. Residues 672 to 693 show a composition bias toward basic and acidic residues; that stretch reads FMEKKARSDENQLDGNKIKDDN. Residues 713 to 773 enclose the Myb-like domain; it reads KDIRPEAPWL…DCFERWIQVD (61 aa). Disordered regions lie at residues 857-880 and 975-994; these read TMTK…PSPL and EQIH…ERTQ. Positions 880–912 form a coiled coil; the sequence is LELSRLKSEREAQIQQIQAQRNFAQLQSQNRAL.

It belongs to the EAF1 family. Component of the NuA4 histone acetyltransferase complex.

Its subcellular location is the nucleus. In terms of biological role, component of the NuA4 histone acetyltransferase complex which is involved in transcriptional activation of selected genes principally by acetylation of nucleosomal histone H4 and H2A. The NuA4 complex is also involved in DNA repair. The protein is Chromatin modification-related protein vid21 (vid21) of Schizosaccharomyces pombe (strain 972 / ATCC 24843) (Fission yeast).